The sequence spans 350 residues: Transmembrane protein 185B (350 aa).

Helical transmembrane passes span 16–36, 41–61, 81–101, 111–131, 168–188, 211–231, and 240–260; these read LIYA…DGII, WAVF…ASVG, FKAM…EILV, FWLL…AACV, WLVV…VVLY, VTMA…EVLL, and TFSY…LMAT.

It belongs to the TMEM185 family.

Its subcellular location is the membrane. This is Transmembrane protein 185B (Tmem185b) from Mus musculus (Mouse).